A 230-amino-acid polypeptide reads, in one-letter code: Ubiquitin carboxyl-terminal hydrolase isozyme L3 (230 aa).

Residues 5 to 229 enclose the UCH catalytic domain; it reads RWLPLEANPE…LRFNAIALSA (225 aa). The segment at 8–13 is interaction with ubiquitin; sequence PLEANP. The Nucleophile role is filled by Cys95. Ser130 is modified (phosphoserine). The interaction with ubiquitin. Crossover loop which restricts access of large ubiquitin adducts to the active site stretch occupies residues 152–159; it reads AHEGQTEA. His169 acts as the Proton donor in catalysis. The segment at 219 to 224 is interaction with ubiquitin; the sequence is ELRFNA.

The protein belongs to the peptidase C12 family. As to quaternary structure, preferentially binds diubiquitin; the interaction does not hydrolyze diubiquitin but, in vitro, inhibits the hydrolyzing activity on other substrates.

It is found in the cytoplasm. It carries out the reaction Thiol-dependent hydrolysis of ester, thioester, amide, peptide and isopeptide bonds formed by the C-terminal Gly of ubiquitin (a 76-residue protein attached to proteins as an intracellular targeting signal).. Inhibited by monoubiquitin and diubiquitin. Deubiquitinating enzyme (DUB) that controls levels of cellular ubiquitin through processing of ubiquitin precursors and ubiquitinated proteins. Thiol protease that recognizes and hydrolyzes a peptide bond at the C-terminal glycine of either ubiquitin or NEDD8. Has a 10-fold preference for Arg and Lys at position P3''. Deubiquitinates ENAC in apical compartments, thereby regulating apical membrane recycling. Indirectly increases the phosphorylation of IGFIR, AKT and FOXO1 and promotes insulin-signaling and insulin-induced adipogenesis. Required for stress-response retinal, skeletal muscle and germ cell maintenance. May be involved in working memory. Can hydrolyze UBB(+1), a mutated form of ubiquitin which is not effectively degraded by the proteasome. The polypeptide is Ubiquitin carboxyl-terminal hydrolase isozyme L3 (UCHL3) (Bos taurus (Bovine)).